The sequence spans 238 residues: Phosphoribosylaminoimidazole-succinocarboxamide synthase (238 aa).

Belongs to the SAICAR synthetase family.

The enzyme catalyses 5-amino-1-(5-phospho-D-ribosyl)imidazole-4-carboxylate + L-aspartate + ATP = (2S)-2-[5-amino-1-(5-phospho-beta-D-ribosyl)imidazole-4-carboxamido]succinate + ADP + phosphate + 2 H(+). It participates in purine metabolism; IMP biosynthesis via de novo pathway; 5-amino-1-(5-phospho-D-ribosyl)imidazole-4-carboxamide from 5-amino-1-(5-phospho-D-ribosyl)imidazole-4-carboxylate: step 1/2. In Desulfitobacterium hafniense (strain Y51), this protein is Phosphoribosylaminoimidazole-succinocarboxamide synthase.